A 482-amino-acid chain; its full sequence is Putative ankyrin repeat protein FPV232 (482 aa).

ANK repeat units follow at residues 36-65 (IPLI…NVNE), 69-100 (RYLT…DLSS), 101-128 (YEER…DGNR), 129-161 (TIDD…DTKI), 166-195 (KLKT…EVNS), 199-228 (GNNS…NTDH), 232-265 (CGTT…SVNI), 270-297 (LGFT…DPNI), and 301-332 (EKET…LRAF).

The sequence is that of Putative ankyrin repeat protein FPV232 from Fowlpox virus (strain NVSL) (FPV).